The chain runs to 323 residues: Phosphoribosylaminoimidazole-succinocarboxamide synthase (323 aa).

Belongs to the SAICAR synthetase family.

The enzyme catalyses 5-amino-1-(5-phospho-D-ribosyl)imidazole-4-carboxylate + L-aspartate + ATP = (2S)-2-[5-amino-1-(5-phospho-beta-D-ribosyl)imidazole-4-carboxamido]succinate + ADP + phosphate + 2 H(+). It participates in purine metabolism; IMP biosynthesis via de novo pathway; 5-amino-1-(5-phospho-D-ribosyl)imidazole-4-carboxamide from 5-amino-1-(5-phospho-D-ribosyl)imidazole-4-carboxylate: step 1/2. The sequence is that of Phosphoribosylaminoimidazole-succinocarboxamide synthase from Azobacteroides pseudotrichonymphae genomovar. CFP2.